Consider the following 514-residue polypeptide: 23S rRNA (uracil(1939)-C(5))-methyltransferase RlmD (514 aa).

[4Fe-4S] cluster is bound by residues Cys70, Cys76, Cys79, and Cys158. S-adenosyl-L-methionine is bound by residues Gln272, Phe301, Asn306, Glu322, Asn350, and Asp371. Cys398 (nucleophile) is an active-site residue.

Belongs to the class I-like SAM-binding methyltransferase superfamily. RNA M5U methyltransferase family. RlmD subfamily.

It carries out the reaction uridine(1939) in 23S rRNA + S-adenosyl-L-methionine = 5-methyluridine(1939) in 23S rRNA + S-adenosyl-L-homocysteine + H(+). Catalyzes the formation of 5-methyl-uridine at position 1939 (m5U1939) in 23S rRNA. This is 23S rRNA (uracil(1939)-C(5))-methyltransferase RlmD from Chromobacterium violaceum (strain ATCC 12472 / DSM 30191 / JCM 1249 / CCUG 213 / NBRC 12614 / NCIMB 9131 / NCTC 9757 / MK).